A 380-amino-acid chain; its full sequence is Ubiquitin-like protein 7 (380 aa).

A Ubiquitin-like domain is found at 18–98 (APKSILQLPE…VLRKSWPEPD (81 aa)). The interval 200–313 (TPMPGADSSS…SSGVQSGTPI (114 aa)) is disordered. The span at 206 to 221 (DSSSRSMPSSSYRDMP) shows a compositional bias: low complexity. Position 230 is a phosphoserine (S230). Low complexity-rich tracts occupy residues 239–253 (STRS…SSRP) and 270–293 (SELA…TPGT). Polar residues predominate over residues 294–313 (QGHSSGTSPMSSGVQSGTPI). Residues 333-377 (SLQIQWQPQLQQLRDMGIQDDELSLRALQATGGDIQAALELIFAG) form the UBA domain.

Binds ubiquitin. Interacts with MAVS; this interaction enhances TRIM21-dependent 'Lys-27'-linked polyubiquitination of MAVS. In terms of processing, deubiquitinated by OTUD4 which stabilizes UBL7 expression.

Its function is as follows. Interferon-stimulated protein that positively regulates RNA virus-triggered innate immune signaling. Mechanistically, promotes 'Lys-27'-linked polyubiquitination of MAVS through TRIM21 leading to enhanced the IFN signaling pathway. The protein is Ubiquitin-like protein 7 (Ubl7) of Mus musculus (Mouse).